The following is a 475-amino-acid chain: Glutamyl-tRNA(Gln) amidotransferase subunit A (475 aa).

Catalysis depends on charge relay system residues Lys66 and Ser141. Ser165 serves as the catalytic Acyl-ester intermediate.

This sequence belongs to the amidase family. GatA subfamily. As to quaternary structure, heterotrimer of A, B and C subunits.

It catalyses the reaction L-glutamyl-tRNA(Gln) + L-glutamine + ATP + H2O = L-glutaminyl-tRNA(Gln) + L-glutamate + ADP + phosphate + H(+). Functionally, allows the formation of correctly charged Gln-tRNA(Gln) through the transamidation of misacylated Glu-tRNA(Gln) in organisms which lack glutaminyl-tRNA synthetase. The reaction takes place in the presence of glutamine and ATP through an activated gamma-phospho-Glu-tRNA(Gln). The chain is Glutamyl-tRNA(Gln) amidotransferase subunit A (gatA) from Thermotoga maritima (strain ATCC 43589 / DSM 3109 / JCM 10099 / NBRC 100826 / MSB8).